Reading from the N-terminus, the 388-residue chain is Chalcone synthase (388 aa).

Cys-164 is a catalytic residue.

The protein belongs to the thiolase-like superfamily. Chalcone/stilbene synthases family.

It carries out the reaction (E)-4-coumaroyl-CoA + 3 malonyl-CoA + 3 H(+) = 2',4,4',6'-tetrahydroxychalcone + 3 CO2 + 4 CoA. It participates in secondary metabolite biosynthesis; flavonoid biosynthesis. The primary product of this enzyme is 4,2',4',6'-tetrahydroxychalcone (also termed naringenin-chalcone or chalcone) which can under specific conditions spontaneously isomerize into naringenin. This is Chalcone synthase (CHS) from Vigna unguiculata (Cowpea).